Reading from the N-terminus, the 667-residue chain is Increased rDNA silencing protein 4 (667 aa).

Polar residues-rich tracts occupy residues methionine 1–alanine 10, serine 18–histidine 33, and glycine 46–asparagine 61. Disordered regions lie at residues methionine 1–methionine 123, alanine 133–methionine 152, serine 234–glutamate 441, and histidine 459–lysine 488. Positions histidine 81–arginine 91 are enriched in basic and acidic residues. The segment covering glutamine 92–methionine 109 has biased composition (polar residues). Low complexity predominate over residues threonine 110–serine 121. The segment covering alanine 133–alanine 144 has biased composition (basic and acidic residues). Residues serine 234–serine 248 show a composition bias toward polar residues. The span at serine 276 to asparagine 289 shows a compositional bias: basic and acidic residues. A compositionally biased stretch (low complexity) spans serine 298 to alanine 312. Basic and acidic residues predominate over residues glutamine 325–asparagine 335. The span at serine 358–serine 371 shows a compositional bias: low complexity. Composition is skewed to polar residues over residues serine 376–serine 394 and serine 424–glutamate 437. An EH domain is found at glycine 568–valine 661.

It belongs to the IRS4 family.

Positive regulator of phosphatidylinositol 4,5-bisphosphate turnover and negatively regulates signaling through the cell integrity pathway. Involved in rDNA silencing. This chain is Increased rDNA silencing protein 4 (IRS4), found in Meyerozyma guilliermondii (strain ATCC 6260 / CBS 566 / DSM 6381 / JCM 1539 / NBRC 10279 / NRRL Y-324) (Yeast).